A 231-amino-acid polypeptide reads, in one-letter code: 4-hydroxy-tetrahydrodipicolinate reductase (231 aa).

NAD(+)-binding positions include Asp-33, Cys-68–Thr-70, and Ser-92–Thr-95. His-124 acts as the Proton donor/acceptor in catalysis. Residue His-125 participates in (S)-2,3,4,5-tetrahydrodipicolinate binding. Lys-128 serves as the catalytic Proton donor. Gly-134–Thr-135 contacts (S)-2,3,4,5-tetrahydrodipicolinate.

The protein belongs to the DapB family.

The protein resides in the cytoplasm. It carries out the reaction (S)-2,3,4,5-tetrahydrodipicolinate + NAD(+) + H2O = (2S,4S)-4-hydroxy-2,3,4,5-tetrahydrodipicolinate + NADH + H(+). The catalysed reaction is (S)-2,3,4,5-tetrahydrodipicolinate + NADP(+) + H2O = (2S,4S)-4-hydroxy-2,3,4,5-tetrahydrodipicolinate + NADPH + H(+). The protein operates within amino-acid biosynthesis; L-lysine biosynthesis via DAP pathway; (S)-tetrahydrodipicolinate from L-aspartate: step 4/4. Functionally, catalyzes the conversion of 4-hydroxy-tetrahydrodipicolinate (HTPA) to tetrahydrodipicolinate. This is 4-hydroxy-tetrahydrodipicolinate reductase from Brachyspira hyodysenteriae (strain ATCC 49526 / WA1).